The primary structure comprises 400 residues: NADH dehydrogenase-like protein MT1860 (400 aa).

This sequence belongs to the NADH dehydrogenase family. FAD serves as cofactor.

In Mycobacterium tuberculosis (strain CDC 1551 / Oshkosh), this protein is NADH dehydrogenase-like protein MT1860.